Reading from the N-terminus, the 402-residue chain is Serine/threonine transporter SstT (402 aa).

8 consecutive transmembrane segments (helical) span residues 17 to 37 (IAIG…ITVI), 44 to 64 (FVGG…ANAL), 78 to 98 (IIVL…ISHY), 138 to 158 (ALSQ…GFAM), 179 to 199 (IVRW…FDTI), 212 to 232 (VLIL…NPII), 295 to 315 (MAGA…TLGI), and 336 to 356 (ASGI…LFGI).

The protein belongs to the dicarboxylate/amino acid:cation symporter (DAACS) (TC 2.A.23) family.

It localises to the cell membrane. The enzyme catalyses L-serine(in) + Na(+)(in) = L-serine(out) + Na(+)(out). It catalyses the reaction L-threonine(in) + Na(+)(in) = L-threonine(out) + Na(+)(out). Functionally, involved in the import of serine and threonine into the cell, with the concomitant import of sodium (symport system). This Streptococcus thermophilus (strain ATCC BAA-250 / LMG 18311) protein is Serine/threonine transporter SstT.